The following is an 878-amino-acid chain: Fanconi-associated nuclease 1 homolog (878 aa).

Residues 32–59 (GKTCPLCNIKFSLASYRSHMNVCKVADD) form a UBZ4-type zinc finger. Zn(2+) is bound by residues C35, C38, H50, and C54. The segment at 88–180 (ENSGQEIPVN…QKSQSESQEA (93 aa)) is disordered. The span at 142-161 (SEVRSVEKEIKKSPVWENRR) shows a compositional bias: basic and acidic residues. Residues 168 to 179 (QNSQKSQSESQE) show a composition bias toward low complexity. Residues E695, D823, E838, and V839 each coordinate Mn(2+). Residues 757–870 (QETIEDNIRR…GIKAEVCHVE (114 aa)) form the VRR-NUC domain.

This sequence belongs to the FAN1 family. It depends on Mn(2+) as a cofactor. Mg(2+) serves as cofactor.

Its subcellular location is the nucleus. The enzyme catalyses Hydrolytically removes 5'-nucleotides successively from the 3'-hydroxy termini of 3'-hydroxy-terminated oligonucleotides.. Nuclease required for the repair of DNA interstrand cross-links (ICL). Acts as a 5'-3' exonuclease that anchors at a cut end of DNA and cleaves DNA successively at every third nucleotide, allowing to excise an ICL from one strand through flanking incisions. This chain is Fanconi-associated nuclease 1 homolog (fan-1), found in Caenorhabditis briggsae.